The primary structure comprises 284 residues: Bifunctional protein FolD (284 aa).

NADP(+) is bound by residues Gly-165–Ser-167 and Ser-190.

Belongs to the tetrahydrofolate dehydrogenase/cyclohydrolase family. As to quaternary structure, homodimer.

It catalyses the reaction (6R)-5,10-methylene-5,6,7,8-tetrahydrofolate + NADP(+) = (6R)-5,10-methenyltetrahydrofolate + NADPH. The enzyme catalyses (6R)-5,10-methenyltetrahydrofolate + H2O = (6R)-10-formyltetrahydrofolate + H(+). The protein operates within one-carbon metabolism; tetrahydrofolate interconversion. Its function is as follows. Catalyzes the oxidation of 5,10-methylenetetrahydrofolate to 5,10-methenyltetrahydrofolate and then the hydrolysis of 5,10-methenyltetrahydrofolate to 10-formyltetrahydrofolate. In Streptococcus equi subsp. zooepidemicus (strain H70), this protein is Bifunctional protein FolD.